A 441-amino-acid polypeptide reads, in one-letter code: Tol-Pal system protein TolB (441 aa).

An N-terminal signal peptide occupies residues 1–39 (MPTMTPAFSRASLSEALRSYGLALLLFLATLLAWQPAHA).

The protein belongs to the TolB family. The Tol-Pal system is composed of five core proteins: the inner membrane proteins TolA, TolQ and TolR, the periplasmic protein TolB and the outer membrane protein Pal. They form a network linking the inner and outer membranes and the peptidoglycan layer.

It localises to the periplasm. In terms of biological role, part of the Tol-Pal system, which plays a role in outer membrane invagination during cell division and is important for maintaining outer membrane integrity. In Bordetella avium (strain 197N), this protein is Tol-Pal system protein TolB.